We begin with the raw amino-acid sequence, 1132 residues long: MQRRGAGLGWPRQQQQQPPPLAVGPRAAAMVPSGGVPQGLGGRSACALLLLCYLNVVPSLGRQTSLTTSVIPKAEQSVAYKDFIYFTVFEGNVRNVSEVSVEYLCSQPCVVNLEAVVSSEFRSSIPVYKKRWKNEKHLHTSRTQIVHVKFPSIMVYRDDYFIRHSISVSAVIVRAWITHKYSGRDWNVKWEENLLHAVAKNYTLLQTIPPFERPFKDHQVCLEWNMGYIWNLRANRIPQCPLENDVVALLGFPYASSGENTGIVKKFPRFRNRELEATRRQRMDYPVFTVSLWLYLLHYCKANLCGILYFVDSNEMYGTPSVFLTEEGYLHIQMHLVKGEDLAVKTKFIIPLKEWFRLDISFNGGQIVVTTSIGQDLKSYHNQTISFREDFHYNDTAGYFIIGGSRYVAGIEGFFGPLKYYRLRSLHPAQIFNPLLEKQLAEQIKLYYERCAEVQEIVSVYASAAKHGGERQEACHLHNSYLDLQRRYGRPSMCRAFPWEKELKDKHPSLFQALLEMDLLTVPRNQNESVSEIGGKIFEKAVKRLSSIDGLHQISSIVPFLTDSSCCGYHKASYYLAVFYETGLNVPRDQLQGMLYSLVGGQGSERLSSMNLGYKHYQGIDNYPLDWELSYAYYSNIATKTPLDQHTLQGDQAYVETIRLKDDEILKVQTKEDGDVFMWLKHEATRGNAAAQQRLAQMLFWGQQGVAKNPEAAIEWYAKGALETEDPALIYDYAIVLFKGQGVKKNRRLALELMKKAASKGLHQAVNGLGWYYHKFKKNYAKAAKYWLKAEEMGNPDASYNLGVLHLDGIFPGVPGRNQTLAGEYFHKAAQGGHMEGTLWCSLYYITGNLETFPRDPEKAVVWAKHVAEKNGYLGHVIRKGLNAYLEGSWHEALLYYVLAAETGIEVSQTNLAHICEERPDLARRYLGVNCVWRYYNFSVFQIDAPSFAYLKMGDLYYYGHQNQSQDLELSVQMYAQAALDGDSQGFFNLALLIEEGTIIPHHILDFLEIDSTLHSNNISILQELYERCWSHSNEESFSPCSLAWLYLHLRLLWGAILHSALIYFLGTFLLSILIAWTVQYFQSVSASDPPPRPSQASPDTATSTASPAVTPAADASDQDQPTVTNNPEPRG.

The disordered stretch occupies residues 1 to 24 (MQRRGAGLGWPRQQQQQPPPLAVG). 3 N-linked (GlcNAc...) asparagine glycosylation sites follow: Asn-201, Asn-382, and Asn-527. Sel1-like repeat units lie at residues 575–609 (YLAVFYETGLNVPRDQLQGMLYSLVGGQGSERLSS), 611–647 (NLGYKHYQGIDNYPLDWELSYAYYSNIATKTPLDQHT), 694–730 (RLAQMLFWGQQGVAKNPEAAIEWYAKGALETEDPALI), 732–767 (DYAIVLFKGQGVKKNRRLALELMKKAASKGLHQAVN), 768–800 (GLGWYYHKFKKNYAKAAKYWLKAEEMGNPDASY), 801–839 (NLGVLHLDGIFPGVPGRNQTLAGEYFHKAAQGGHMEGTL), and 840–877 (WCSLYYITGNLETFPRDPEKAVVWAKHVAEKNGYLGHV). Ser-608 carries the phosphoserine modification. N-linked (GlcNAc...) asparagine glycosylation occurs at Asn-937. Residues 952 to 988 (KMGDLYYYGHQNQSQDLELSVQMYAQAALDGDSQGFF) form a Sel1-like 8 repeat. A helical transmembrane segment spans residues 1057 to 1077 (ILHSALIYFLGTFLLSILIAW). Residues 1087-1132 (ASDPPPRPSQASPDTATSTASPAVTPAADASDQDQPTVTNNPEPRG) are disordered. Positions 1097-1116 (ASPDTATSTASPAVTPAADA) are enriched in low complexity. The segment covering 1119–1132 (QDQPTVTNNPEPRG) has biased composition (polar residues).

The protein resides in the membrane. The sequence is that of Protein sel-1 homolog 3 (SEL1L3) from Homo sapiens (Human).